A 131-amino-acid chain; its full sequence is UPF0102 protein YraN (131 aa).

The span at 1 to 19 (MATVPTRSGSPRQLTTKQT) shows a compositional bias: polar residues. Positions 1–21 (MATVPTRSGSPRQLTTKQTGD) are disordered.

This sequence belongs to the UPF0102 family.

This is UPF0102 protein YraN from Escherichia coli O127:H6 (strain E2348/69 / EPEC).